The primary structure comprises 536 residues: Lariat debranching enzyme (536 aa).

4 residues coordinate a divalent metal cation: Cys-8, His-10, Asp-39, and Asn-84. Positions 124 to 154 (SGIFKSHDYRKGHFECPPYNQQTIRSAYHVR) are lariat recognition loop. Residues His-174, His-226, and His-228 each coordinate a divalent metal cation. The disordered stretch occupies residues 388–536 (EEGSVRGEYE…YAAEDEDEAK (149 aa)). A compositionally biased stretch (polar residues) spans 414-426 (EYNTDNSGLSSIN). The segment covering 430–441 (IMLDDEGGDEDL) has biased composition (acidic residues). Residues 484-504 (ELEKSGVNKQVEEKSLNERPL) are compositionally biased toward basic and acidic residues.

It belongs to the lariat debranching enzyme family. The cofactor is Fe(2+). Zn(2+) serves as cofactor. Mn(2+) is required as a cofactor.

It localises to the nucleus. With respect to regulation, active in presence of diverse metals including Fe(2+), Zn(2+), Mn(2+). Also activated by Ca(2+). Binds two metal cations in two adjacent alpha and beta metal-binding pockets. Functionally, cleaves the 2'-5' phosphodiester linkage at the branch point of excised lariat intron RNA and converts them into linear molecules that can be subsequently degraded, thereby facilitating ribonucleotide turnover. Linked to its role in pre-mRNA processing mechanism, may also participate in retrovirus replication and have an antiviral cell-intrinsic defense function. The polypeptide is Lariat debranching enzyme (DBR1) (Gallus gallus (Chicken)).